Here is a 619-residue protein sequence, read N- to C-terminus: ATP-dependent RNA helicase abstrakt (619 aa).

Over residues 1–11 the composition is skewed to basic residues; it reads MAHVKRYRRSS. Disordered stretches follow at residues 1 to 25 and 50 to 69; these read MAHV…EDYV and ETAQ…SQGA. Phosphoserine is present on residues Ser-11, Ser-13, Ser-14, Ser-56, Ser-57, Ser-58, and Ser-66. The Q motif motif lies at 177 to 205; that stretch reads RSFREMKFPKGILNGLAAKGIKNPTPIQV. Residues 208 to 392 form the Helicase ATP-binding domain; sequence LPTVLAGRDL…RSALVKPVTI (185 aa). 221–228 contributes to the ATP binding site; it reads AFTGSGKT. The DEAD box signature appears at 340-343; the sequence is DEAD. The region spanning 403–563 is the Helicase C-terminal domain; that stretch reads NVTQQVEYVK…EVPDFLDELA (161 aa). The CCHC-type zinc finger occupies 577–594; that stretch reads HGCTYCGGLGHRITECPK.

It belongs to the DEAD box helicase family. DDX41 subfamily.

It localises to the nucleus. It carries out the reaction ATP + H2O = ADP + phosphate + H(+). In terms of biological role, ATP-dependent RNA helicase. Is essential for the directed and fasciculated early outgrowth of the bolwig nerves, as well as for its navigation at later stages. Is required during post-transcriptional gene expression. Plays a role during morphogenetic process, apoptosis and the establishment of cell polarity. The protein is ATP-dependent RNA helicase abstrakt (abs) of Drosophila melanogaster (Fruit fly).